The primary structure comprises 1304 residues: Histone-lysine N-methyltransferase met-2 (1304 aa).

Over residues 1–16 the composition is skewed to polar residues; it reads MDQQEPSNNVDTSSIL. The disordered stretch occupies residues 1–31; it reads MDQQEPSNNVDTSSILSDDGMETQEQSSFVT. Residues 97 to 129 adopt a coiled-coil conformation; that stretch reads NESEQEAVAAQRRVDAEKTAKDEAELKQQEEAE. Residues 834–909 enclose the MBD domain; the sequence is FHRNSPIHTP…FSFDARIDTA (76 aa). Residues 971–1049 enclose the Pre-SET domain; the sequence is SGCSCDGDCS…SCYNRVVQNN (79 aa). Zn(2+) contacts are provided by Cys-973, Cys-975, Cys-979, Cys-985, Cys-987, Cys-1030, Cys-1034, Cys-1036, and Cys-1041. The SET domain maps to 1052-1277; it reads YPMHIFKTAQ…AGDELTWDYQ (226 aa). Residues 1062–1064, Asp-1098, and Tyr-1100 contribute to the S-adenosyl-L-methionine site; that span reads SGW. The segment covering 1113–1122 has biased composition (basic and acidic residues); it reads EKGREDHETD. A disordered region spans residues 1113–1201; it reads EKGREDHETD…DSMEKDNIES (89 aa). A compositionally biased stretch (acidic residues) spans 1128–1144; the sequence is DESDYDDEEGSDGDSGD. Residues 1152–1165 are compositionally biased toward basic and acidic residues; it reads KRQDSSESGEETKR. A compositionally biased stretch (basic residues) spans 1166-1178; it reads LTRQKRKQSKKSG. Basic and acidic residues predominate over residues 1182–1201; it reads SVEKDDTTPRDSMEKDNIES. S-adenosyl-L-methionine is bound by residues Arg-1231 and 1234-1235; that span reads NH. Residues Cys-1237, Cys-1290, Cys-1292, and Cys-1297 each contribute to the Zn(2+) site. Residues 1286-1302 form the Post-SET domain; it reads TQLTCHCGAENCTGRLL.

This sequence belongs to the class V-like SAM-binding methyltransferase superfamily.

The protein resides in the nucleus. Its subcellular location is the chromosome. The protein localises to the cytoplasm. It catalyses the reaction N(6)-methyl-L-lysyl(9)-[histone H3] + S-adenosyl-L-methionine = N(6),N(6)-dimethyl-L-lysyl(9)-[histone H3] + S-adenosyl-L-homocysteine + H(+). The catalysed reaction is L-lysyl(9)-[histone H3] + S-adenosyl-L-methionine = N(6)-methyl-L-lysyl(9)-[histone H3] + S-adenosyl-L-homocysteine + H(+). Its function is as follows. Histone methyltransferase which is required for the mono- and dimethylation of 'Lys-9' of histone H3. This increases the efficiency of set-25-mediated trimethylation of histone H3 'Lys-9'. Involved in the transcriptional repression of lin-3 which is required for the negative regulation of vulval cell fate specification during postembryonic development. Has a role in blocking checkpoint signaling and mediating the transcriptional silencing of meiotic sex chromosome inactivation; a mechanism which enables checkpoint proteins to distinguish between the partnerless male X chromosome and asynapsed chromosomes thereby shielding the lone X from inappropriate activation of an apoptotic program. Operates redundantly with set-25 to position chromatin at the nuclear periphery. Required for small-RNA-induced H3K9 methylation. Together with set-25, protects and stabilizes repeat-rich genomic regions by suppressing transcription-induced replication stress through methylation of H3K9. Together with spr-5, required for transgenerational fertility. In Caenorhabditis elegans, this protein is Histone-lysine N-methyltransferase met-2 (met-2).